The primary structure comprises 518 residues: Glutamate--cysteine ligase (518 aa).

Belongs to the glutamate--cysteine ligase type 1 family. Type 1 subfamily.

It catalyses the reaction L-cysteine + L-glutamate + ATP = gamma-L-glutamyl-L-cysteine + ADP + phosphate + H(+). It functions in the pathway sulfur metabolism; glutathione biosynthesis; glutathione from L-cysteine and L-glutamate: step 1/2. The polypeptide is Glutamate--cysteine ligase (Escherichia coli O157:H7).